The chain runs to 187 residues: uncharacterized protein (187 aa).

This is an uncharacterized protein from Dictyostelium discoideum (Social amoeba).